The following is a 53-amino-acid chain: UPF0391 membrane protein Bmul_5473/BMULJ_06024 (53 aa).

Transmembrane regions (helical) follow at residues 5–25 (ALIF…GIAA) and 30–50 (IAKI…LLGV).

The protein belongs to the UPF0391 family.

It localises to the cell membrane. This Burkholderia multivorans (strain ATCC 17616 / 249) protein is UPF0391 membrane protein Bmul_5473/BMULJ_06024.